Reading from the N-terminus, the 562-residue chain is MDREGPRGPRSGASQENEQWKKETLEDEFSGVRLQKLEQQRQLFEKKQRRKRQEPLMVQANPDATLRHRRPRRGEERFQSDSSWGLGVGSPFLQENVPQAHLPSGAHSALVTMSYVADGSGERAPLLSPRGAVYTRGNGPAVRHHLCWLPDSSDSDVEEVTMEDIPVISRPPQTNLANLRRGWLASPGPGISQEEKEEEVGSTDARVEDKTPSPDPDPDPTVNSDGDHGDLAPCKVEENTAQKNTETASGIGDEDREKGEVTESTETNYAPVASKVLQGDDGDASNHNAWNMTCPQPRIPGPRLGEDMEAYVLLPAPRDHMVQCRIVRNKHGMDKGMFPSYYLYLEAEDGVAHFLLAGRKRKRSKTSNYLISLDPKDMSRNGSNFVGKVRSNVLGTKFTIFDNGVNPERSYWVPDSARIREELGVVCYETNVLGFRGPRKMTVILPGMDSRKQRMKVQPQNDQDSILSRVQKGAGHGLLLLQNKAPSWSDESGAYVLNFHGRVTRASVKNFQIVHPDEPDHLVLQFGRVAPNIFTMDFRYPLCPLQAFAICLSSFDGKLAFF.

The segment at 1–81 (MDREGPRGPR…RRGEERFQSD (81 aa)) is disordered. A compositionally biased stretch (basic and acidic residues) spans 35-46 (QKLEQQRQLFEK). Phosphoserine occurs at positions 152, 153, and 155. Residues 179 to 294 (LRRGWLASPG…SNHNAWNMTC (116 aa)) form a disordered region. Residue Thr-211 is modified to Phosphothreonine. Ser-213 carries the phosphoserine modification. Residues 225–240 (DGDHGDLAPCKVEENT) are compositionally biased toward basic and acidic residues. The span at 285-294 (SNHNAWNMTC) shows a compositional bias: polar residues.

It belongs to the TUB family. In terms of tissue distribution, expressed in retina and testis.

The protein resides in the cytoplasm. It localises to the secreted. The sequence is that of Tubby-related protein 2 (Tulp2) from Mus musculus (Mouse).